The following is a 248-amino-acid chain: 4-hydroxy-tetrahydrodipicolinate reductase (248 aa).

NAD(+) is bound by residues Gly9–Val14, Gly77–Thr79, and Ala104–Phe107. His134 acts as the Proton donor/acceptor in catalysis. His135 lines the (S)-2,3,4,5-tetrahydrodipicolinate pocket. Lys138 functions as the Proton donor in the catalytic mechanism. Gly144–Thr145 contacts (S)-2,3,4,5-tetrahydrodipicolinate. Positions Arg157–Ala176 are disordered.

This sequence belongs to the DapB family.

It localises to the cytoplasm. It carries out the reaction (S)-2,3,4,5-tetrahydrodipicolinate + NAD(+) + H2O = (2S,4S)-4-hydroxy-2,3,4,5-tetrahydrodipicolinate + NADH + H(+). The enzyme catalyses (S)-2,3,4,5-tetrahydrodipicolinate + NADP(+) + H2O = (2S,4S)-4-hydroxy-2,3,4,5-tetrahydrodipicolinate + NADPH + H(+). It participates in amino-acid biosynthesis; L-lysine biosynthesis via DAP pathway; (S)-tetrahydrodipicolinate from L-aspartate: step 4/4. Its function is as follows. Catalyzes the conversion of 4-hydroxy-tetrahydrodipicolinate (HTPA) to tetrahydrodipicolinate. This chain is 4-hydroxy-tetrahydrodipicolinate reductase, found in Corynebacterium diphtheriae (strain ATCC 700971 / NCTC 13129 / Biotype gravis).